A 557-amino-acid chain; its full sequence is MRSDMIKKGFDKAPHRSLLKATGLKDEDFDKPFIAICNSFIEIIPGHKHLNEFGKLVKEAVRAAGMVPFEFNTIGVDDGIAMGHIGMRYSLPSREIIADSVETVVNAHWFDGMICIPNCDKITPGMMMAALRINIPTVFVSGGPMAAGKTSKGEVVDLSSVFEGVGAYQSGKISEEELKDIEDHGCPSCGSCSGMFTANSMNCLCEVLGLALPGNGSILAIDPRREELIKQAAEKLKILIERDIKPRDIVTEEAIDDAFALDMAMGGSTNTVLHTLALAQEAGLDYDMNRIDAVSRRVPHLCKVSPASNWHMEDIDRAGGISAILKEMSRKEGVLHLDRITATGQTLRENIAHAEIQDKEVIHSLENPHSEEGGLRILKGNLAKDGAVIKSGATEVKRFEGPCVIFNSQDEALAGIMLGKVKKGDVVVIRYEGPRGGPGMPEMLAPTSAIAGMGLGADVALLTDGRFSGASRGISVGHISPEAAAGGTIALLEQGDIVCIDVEERLLEVRVSDEELEKRKKGWKRPEPKVKTGWLGRYAQMVTSANTGAVLKIPNFD.

Residue aspartate 78 participates in Mg(2+) binding. Cysteine 119 serves as a coordination point for [2Fe-2S] cluster. Mg(2+) is bound by residues aspartate 120 and lysine 121. Lysine 121 is modified (N6-carboxylysine). Residue cysteine 192 coordinates [2Fe-2S] cluster. Glutamate 442 is a binding site for Mg(2+). Serine 468 functions as the Proton acceptor in the catalytic mechanism.

Belongs to the IlvD/Edd family. Homodimer. [2Fe-2S] cluster serves as cofactor. It depends on Mg(2+) as a cofactor.

It catalyses the reaction (2R)-2,3-dihydroxy-3-methylbutanoate = 3-methyl-2-oxobutanoate + H2O. The enzyme catalyses (2R,3R)-2,3-dihydroxy-3-methylpentanoate = (S)-3-methyl-2-oxopentanoate + H2O. It functions in the pathway amino-acid biosynthesis; L-isoleucine biosynthesis; L-isoleucine from 2-oxobutanoate: step 3/4. The protein operates within amino-acid biosynthesis; L-valine biosynthesis; L-valine from pyruvate: step 3/4. In terms of biological role, functions in the biosynthesis of branched-chain amino acids. Catalyzes the dehydration of (2R,3R)-2,3-dihydroxy-3-methylpentanoate (2,3-dihydroxy-3-methylvalerate) into 2-oxo-3-methylpentanoate (2-oxo-3-methylvalerate) and of (2R)-2,3-dihydroxy-3-methylbutanoate (2,3-dihydroxyisovalerate) into 2-oxo-3-methylbutanoate (2-oxoisovalerate), the penultimate precursor to L-isoleucine and L-valine, respectively. The sequence is that of Dihydroxy-acid dehydratase from Bacillus mycoides (strain KBAB4) (Bacillus weihenstephanensis).